The sequence spans 634 residues: 1-deoxy-D-xylulose-5-phosphate synthase (634 aa).

Thiamine diphosphate contacts are provided by residues His74 and Ala115–Ser117. Asp146 lines the Mg(2+) pocket. Thiamine diphosphate-binding positions include Gly147 to Ala148, Asn176, Tyr283, and Glu365. Position 176 (Asn176) interacts with Mg(2+).

This sequence belongs to the transketolase family. DXPS subfamily. As to quaternary structure, homodimer. Mg(2+) serves as cofactor. Thiamine diphosphate is required as a cofactor.

The enzyme catalyses D-glyceraldehyde 3-phosphate + pyruvate + H(+) = 1-deoxy-D-xylulose 5-phosphate + CO2. Its pathway is metabolic intermediate biosynthesis; 1-deoxy-D-xylulose 5-phosphate biosynthesis; 1-deoxy-D-xylulose 5-phosphate from D-glyceraldehyde 3-phosphate and pyruvate: step 1/1. Functionally, catalyzes the acyloin condensation reaction between C atoms 2 and 3 of pyruvate and glyceraldehyde 3-phosphate to yield 1-deoxy-D-xylulose-5-phosphate (DXP). The sequence is that of 1-deoxy-D-xylulose-5-phosphate synthase from Burkholderia orbicola (strain MC0-3).